We begin with the raw amino-acid sequence, 721 residues long: Centlein (721 aa).

A coiled-coil region spans residues 52 to 164 (KNEKAISEQT…LRDENEEVVN (113 aa)). Disordered regions lie at residues 156 to 180 (RDEN…KSEM) and 259 to 288 (ETSQ…QQEV). Composition is skewed to basic and acidic residues over residues 165 to 178 (PEEK…KAKS) and 267 to 284 (IEND…DSRA). Coiled coils occupy residues 345–515 (LLRE…EDLK) and 573–626 (QSEQ…TQKS). At threonine 658 the chain carries Phosphothreonine.

Interacts with CEP250 and CEP68. Interacts with NEK2; the interaction leads to phosphorylation of CNTLN. In terms of processing, phosphorylated directly or indirectly by NEK2.

The protein localises to the cytoplasm. The protein resides in the cytoskeleton. It localises to the microtubule organizing center. It is found in the centrosome. Its subcellular location is the centriole. In terms of biological role, required for centrosome cohesion and recruitment of CEP68 to centrosomes. This is Centlein from Rattus norvegicus (Rat).